A 258-amino-acid polypeptide reads, in one-letter code: Thrombin-like enzyme ancrod-2 (258 aa).

A signal peptide spans 1–18 (MVLIRVLANLVILQLSYA). The propeptide occupies 19–24 (QKSSEL). The 227-residue stretch at 25–251 (VIGGDECNIN…HLHWILSIMA (227 aa)) folds into the Peptidase S1 domain. 6 cysteine pairs are disulfide-bonded: Cys-31–Cys-165, Cys-52–Cys-68, Cys-102–Cys-256, Cys-144–Cys-212, Cys-176–Cys-191, and Cys-202–Cys-227. Catalysis depends on charge relay system residues His-67 and Asp-112. N-linked (GlcNAc...) asparagine glycans are attached at residues Asn-123 and Asn-172. Ser-206 functions as the Charge relay system in the catalytic mechanism. A glycan (N-linked (GlcNAc...) asparagine) is linked at Asn-253.

The protein belongs to the peptidase S1 family. Snake venom subfamily. Monomer. Expressed by the venom gland.

Its subcellular location is the secreted. It catalyses the reaction Selective cleavage of Arg-|-Xaa bond in fibrinogen, to form fibrin, and release fibrinopeptide A. The specificity of further degradation of fibrinogen varies with species origin of the enzyme.. In terms of biological role, thrombin-like snake venom serine protease. Cleaves fibrinogen (FGA) to split of fibrinopeptides AM, AO, and AY; the aberrant fibrinogen is then incapable of being cross-linked, forming easily dispersible clots. This chain is Thrombin-like enzyme ancrod-2, found in Calloselasma rhodostoma (Malayan pit viper).